Reading from the N-terminus, the 256-residue chain is 5-oxoprolinase subunit A (256 aa).

Belongs to the LamB/PxpA family. As to quaternary structure, forms a complex composed of PxpA, PxpB and PxpC.

It catalyses the reaction 5-oxo-L-proline + ATP + 2 H2O = L-glutamate + ADP + phosphate + H(+). Its function is as follows. Catalyzes the cleavage of 5-oxoproline to form L-glutamate coupled to the hydrolysis of ATP to ADP and inorganic phosphate. This chain is 5-oxoprolinase subunit A, found in Alkaliphilus metalliredigens (strain QYMF).